Consider the following 145-residue polypeptide: Bacilliredoxin BrxB (145 aa).

Catalysis depends on nucleophile residues C52 and C54. C52 carries the post-translational modification S-bacillithiol cysteine disulfide. A CXC active site motif motif is present at residues 52–54 (CGC). The cysteines at positions 52 and 54 are disulfide-linked.

The protein belongs to the bacilliredoxin family. In terms of assembly, interacts with BrxC. Post-translationally, N-terminal Cys of the CXC active site motif can react with bacillithiol (BSH) to form mixed disulfides. S-bacillithiolation protects Cys residues against overoxidation by acting as a redox switch in response to oxidative stress.

Its function is as follows. S-bacillithiolation is the formation of mixed disulfide bonds between protein thiols and the general thiol reductant bacillithiol (BSH) under oxidative stress. BSH is an equivalent of glutathione (GSH) in Firmicutes. This protein is a dithiol bacilliredoxin, which debacillithiolates (removes BSH) the S-bacillithiolated OhrR (OhrR-SSB) in vitro and in vivo NaOCl-generated S-bacillithiolated MetE (MetE-SSB). Involved in maintaining redox homeostasis in response to disulfide stress conditions. This Bacillus subtilis (strain 168) protein is Bacilliredoxin BrxB.